Reading from the N-terminus, the 419-residue chain is 3-isopropylmalate dehydratase large subunit (419 aa).

Residues C300, C360, and C363 each coordinate [4Fe-4S] cluster.

The protein belongs to the aconitase/IPM isomerase family. LeuC type 2 subfamily. Heterodimer of LeuC and LeuD. Requires [4Fe-4S] cluster as cofactor.

The catalysed reaction is (2R,3S)-3-isopropylmalate = (2S)-2-isopropylmalate. Its pathway is amino-acid biosynthesis; L-leucine biosynthesis; L-leucine from 3-methyl-2-oxobutanoate: step 2/4. Its function is as follows. Catalyzes the isomerization between 2-isopropylmalate and 3-isopropylmalate, via the formation of 2-isopropylmaleate. In Clostridium beijerinckii (strain ATCC 51743 / NCIMB 8052) (Clostridium acetobutylicum), this protein is 3-isopropylmalate dehydratase large subunit.